A 560-amino-acid polypeptide reads, in one-letter code: Transcription termination factor 5, mitochondrial (560 aa).

Residues 1-23 (MLRNGQNQAQLLARSLGQLARGM) constitute a mitochondrion transit peptide. The segment at 23 to 47 (MASSKRVSSKKEDLKPKLPKPPTVE) is disordered.

This sequence belongs to the mTERF family. As to quaternary structure, probably binds to the mTTF-DNA complex.

It is found in the mitochondrion. In terms of biological role, binds promoter DNA and regulates initiation of transcription. Regulates mitochondrial replication and transcription. Required for normal topology and maintenance of mitochondrial DNA (mtDNA) levels. Regulates mtDNA replication by re-activating replication after replication pausing. Likely to regulate replication pausing by coordinating with the mitochondrial termination factor mTTF which promotes replication pausing. Their function in replication pausing prevents unregulated replication that may occur for example by collisions between the machineries of DNA replication and transcription during mtDNA synthesis. This ensures the incorporation of RNA transcripts into replication intermediates at the replication fork and allows for proper fork progression. Possibly functions downstream of Dref which activates genes involved in mtDNA replication and maintenance. This chain is Transcription termination factor 5, mitochondrial, found in Drosophila melanogaster (Fruit fly).